The following is a 339-amino-acid chain: MKFVDEAFVRVEAGNGGHGCLSFRREKFIPRGGPDGGDGGDGGSVYFVADKSVNTLVEFRYQRLLRAQNGQPGMGRLRSGKKGEDLIVPVPLGTTVYDKETSELIGDLIEAGDKLCVARGGRHGLGNTHFKSSTNRAPRRTISGEEGEARELKLELKLLADVGLLGLPNAGKSTFIHAVSKATPKIADYPFTTLYPHLGVVRVEEYRSFVIADIPGLIEGASEGAGLGVQFLKHLERTQLLLHIVDIAPLDGSDPVQSIQAIISELEQFSQNLSQKPRWLVFNKIDLLPPDVAQARCQEIINRLNWKGPVYKISAIKRQGTELLCYDLMSFLETNQRSI.

In terms of domain architecture, Obg spans 1–159 (MKFVDEAFVR…RELKLELKLL (159 aa)). The region spanning 160-333 (ADVGLLGLPN…LCYDLMSFLE (174 aa)) is the OBG-type G domain. GTP is bound by residues 166-173 (GLPNAGKS), 191-195 (FTTLY), 213-216 (DIPG), 283-286 (NKID), and 314-316 (SAI). Mg(2+) is bound by residues Ser-173 and Thr-193.

It belongs to the TRAFAC class OBG-HflX-like GTPase superfamily. OBG GTPase family. In terms of assembly, monomer. Requires Mg(2+) as cofactor.

The protein localises to the cytoplasm. Functionally, an essential GTPase which binds GTP, GDP and possibly (p)ppGpp with moderate affinity, with high nucleotide exchange rates and a fairly low GTP hydrolysis rate. Plays a role in control of the cell cycle, stress response, ribosome biogenesis and in those bacteria that undergo differentiation, in morphogenesis control. In Coxiella burnetii (strain RSA 331 / Henzerling II), this protein is GTPase Obg.